Here is a 503-residue protein sequence, read N- to C-terminus: Cytochrome P450 3A9 (503 aa).

C442 is a heme binding site.

The protein belongs to the cytochrome P450 family. Heme serves as cofactor. In terms of tissue distribution, mainly expressed in olfactory epithelium.

The protein resides in the endoplasmic reticulum membrane. It localises to the microsome membrane. It catalyses the reaction an organic molecule + reduced [NADPH--hemoprotein reductase] + O2 = an alcohol + oxidized [NADPH--hemoprotein reductase] + H2O + H(+). Its function is as follows. This isozyme seems to be implicated in olfaction. Active in the demethylation of erythromycin as well as benzphetamine. The chain is Cytochrome P450 3A9 (Cyp3a9) from Rattus norvegicus (Rat).